The following is a 660-amino-acid chain: Arginine--tRNA ligase, cytoplasmic (660 aa).

Met1 bears the N-acetylmethionine mark. The could be involved in the assembly of the multisynthetase complex stretch occupies residues 1 to 72 (MDGLVAQCSA…QEERRKPTKN (72 aa)). L-arginine is bound by residues 200–202 (SPN), His211, Tyr384, Asp388, and Gln412. Residues 201–212 (PNIAKEMHVGHL) carry the 'HIGH' region motif. An interaction with tRNA region spans residues 529–543 (NTAAYLLYAFTRIRS).

It belongs to the class-I aminoacyl-tRNA synthetase family. Interacts (via N-terminus) with AIMP1 (via N-terminus); this stimulates its catalytic activity. Interacts (via N-terminus) with LARS2 (via C-terminus). Monomer. Part of a multisubunit complex that groups tRNA ligases for Arg (RARS1), Asp (DARS1), Gln (QARS1), Ile (IARS1), Leu (LARS1), Lys (KARS1), Met (MARS1) the bifunctional ligase for Glu and Pro (EPRS1) and the auxiliary subunits AIMP1/p43, AIMP2/p38 and EEF1E1/p18. Interacts with QARS1. Part of a complex composed of RARS1, QARS1 and AIMP1.

The protein resides in the cytoplasm. It is found in the cytosol. It carries out the reaction tRNA(Arg) + L-arginine + ATP = L-arginyl-tRNA(Arg) + AMP + diphosphate. Its function is as follows. Forms part of a macromolecular complex that catalyzes the attachment of specific amino acids to cognate tRNAs during protein synthesis. Modulates the secretion of AIMP1 and may be involved in generation of the inflammatory cytokine EMAP2 from AIMP1. In Mus musculus (Mouse), this protein is Arginine--tRNA ligase, cytoplasmic (Rars1).